Consider the following 554-residue polypeptide: Potassium-transporting ATPase potassium-binding subunit (554 aa).

The next 12 helical transmembrane spans lie at 1–21 (MSSQ…LALA), 59–79 (WPAY…FLYL), 131–151 (GLAV…VALV), 174–194 (VRIL…AGAI), 246–266 (PNPL…FALT), 279–299 (GYAI…LMMW), 323–343 (FGIA…TGAV), 352–372 (GFGG…PGGV), 375–395 (GLYG…LMVG), 412–432 (FAAC…AVAM), 481–501 (IGIA…ALAG), and 525–545 (GLLV…ALAL).

It belongs to the KdpA family. In terms of assembly, the system is composed of three essential subunits: KdpA, KdpB and KdpC.

It localises to the cell membrane. Functionally, part of the high-affinity ATP-driven potassium transport (or Kdp) system, which catalyzes the hydrolysis of ATP coupled with the electrogenic transport of potassium into the cytoplasm. This subunit binds the extracellular potassium ions and delivers the ions to the membrane domain of KdpB through an intramembrane tunnel. The protein is Potassium-transporting ATPase potassium-binding subunit of Streptomyces griseus subsp. griseus (strain JCM 4626 / CBS 651.72 / NBRC 13350 / KCC S-0626 / ISP 5235).